Reading from the N-terminus, the 117-residue chain is Large ribosomal subunit protein bL20c (117 aa).

Belongs to the bacterial ribosomal protein bL20 family.

The protein resides in the plastid. It is found in the chloroplast. Its function is as follows. Binds directly to 23S ribosomal RNA and is necessary for the in vitro assembly process of the 50S ribosomal subunit. It is not involved in the protein synthesizing functions of that subunit. The polypeptide is Large ribosomal subunit protein bL20c (Acorus calamus (Sweet flag)).